Reading from the N-terminus, the 703-residue chain is Prolyl 3-hydroxylase 2 (703 aa).

Residues 1–21 form the signal peptide; sequence MRESTWVSLLLLLLLPTPQRG. Residues 17 to 40 are disordered; the sequence is TPQRGGPQDGRRSPEPEPERGPLQ. Residues 25–36 are compositionally biased toward basic and acidic residues; sequence DGRRSPEPEPER. 4 TPR repeats span residues 42 to 75, 144 to 177, 205 to 238, and 301 to 334; these read FDLLYASGVAAYYSGDYERAVRDLEAALSSHRRL, RVPYNYLQRAYIKLNQLEKAMEAAHTFFMANPEH, HLESYNAGVKHYEADDFESAIKYFEQALREYFNE, and PLHYDYLQFAYYRVGEYVKALECAKAYLMFHPDN. Residues Asn-444 and Asn-544 are each glycosylated (N-linked (GlcNAc...) asparagine). One can recognise a Fe2OG dioxygenase domain in the interval 552 to 666; it reads THMVCRTALS…RCAVALWFTL (115 aa). Fe cation-binding residues include His-575, Asp-577, and His-647. Arg-657 is a catalytic residue. Positions 700 to 703 match the Prevents secretion from ER motif; that stretch reads KDEL.

This sequence belongs to the leprecan family. It depends on Fe cation as a cofactor. Requires L-ascorbate as cofactor. As to expression, detected in kidney. Detected on kidney tubular cells, pancreas acinar cells, Schwann cells of the peripheral nerve in the pinna, and in tunica adventitia, the smooth muscle layer of the aortic wall (at protein level). Detected in lung, skeletal muscle and kidney. Detected in kidney glomeruli and in prehypertrophic regions of long bone from neonates. In the eye, detected in the epithelial layer of the cornea and at lower levels in the sclera at the posterior end of the eye.

The protein resides in the endoplasmic reticulum. It is found in the sarcoplasmic reticulum. The protein localises to the golgi apparatus. The catalysed reaction is L-prolyl-[collagen] + 2-oxoglutarate + O2 = trans-3-hydroxy-L-prolyl-[collagen] + succinate + CO2. Functionally, prolyl 3-hydroxylase that catalyzes the post-translational formation of 3-hydroxyproline on collagens. Contributes to proline 3-hydroxylation of collagen COL4A1 and COL1A1 in tendons, the eye sclera and in the eye lens capsule. Has high activity with the type IV collagen COL4A1, and lower activity with COL1A1. Catalyzes hydroxylation of the first Pro in Gly-Pro-Hyp sequences where Hyp is 4-hydroxyproline. Has no activity on substrates that have proline instead of 4-hydroxyproline in the third position. This chain is Prolyl 3-hydroxylase 2, found in Mus musculus (Mouse).